Consider the following 91-residue polypeptide: Probable Fe(2+)-trafficking protein (91 aa).

This sequence belongs to the Fe(2+)-trafficking protein family.

Its function is as follows. Could be a mediator in iron transactions between iron acquisition and iron-requiring processes, such as synthesis and/or repair of Fe-S clusters in biosynthetic enzymes. This is Probable Fe(2+)-trafficking protein from Ralstonia nicotianae (strain ATCC BAA-1114 / GMI1000) (Ralstonia solanacearum).